The primary structure comprises 1043 residues: BAG family molecular chaperone regulator 6 (1043 aa).

Disordered regions lie at residues 253–294, 311–331, 343–366, 410–500, and 533–566; these read KEEL…GKTV, DVKE…PYPI, VEAS…SDLH, NIPV…AESR, and SVES…KKSF. Composition is skewed to basic and acidic residues over residues 311–324, 343–357, 416–443, and 478–487; these read DVKE…KEEP, VEAS…EGRN, SENH…KKEQ, and KRMEKSKETK. Polar residues predominate over residues 534-543; it reads VESNSNLQEE. Basic and acidic residues predominate over residues 550 to 566; the sequence is KPCEAKENREQPAKKSF. The IQ domain maps to 568–597; it reads EEEAARIIQSMYRGYDVRRWEPIKKLKEIA. The 78-residue stretch at 595–672 folds into the BAG domain; it reads EIATVREQMG…SIQDKLDSLK (78 aa). The span at 724–741 shows a compositional bias: basic and acidic residues; that stretch reads SPEEHPMSVLNRTDEKQA. Disordered stretches follow at residues 724 to 749, 764 to 799, 817 to 975, and 1015 to 1043; these read SPEE…ETEE, ATEN…GNGM, EPIN…ISKE, and EKKL…DAVL. The span at 840–852 shows a compositional bias: low complexity; that stretch reads ASEVSEAETNSSE. Residues 853-871 are compositionally biased toward basic and acidic residues; it reads NENRKGEDDIVLHSEKNVE. Polar residues-rich tracts occupy residues 885-899 and 919-932; these read QPLS…TREG and SPNN…QTSE. Residues 934 to 951 show a composition bias toward basic and acidic residues; it reads QDEKEQSPETEVIVKEQP. A coiled-coil region spans residues 971-1024; it reads GISKETKKLMEENQRFKETMETLVKAGREQLEVISKLTSRVKSLEKKLSHKKKT. Residues 1018–1031 are compositionally biased toward basic residues; it reads LSHKKKTQIRRRAS. Residues 1034–1043 show a composition bias toward polar residues; sequence MSVSPTDAVL.

Binds to the ATPase domain of HSP70/HSC70 chaperones. Interacts with calmodulins CAM1, CAM2, CAM3, CAM4, CAM6 and CAM7. Interacts with BAGP1 and APCB1. In terms of tissue distribution, detected in stems, leaves, flowers and roots.

In terms of biological role, co-chaperone that regulates diverse cellular pathways, such as programmed cell death and stress responses. Involved in plant basal resistance. Involved in basal heat response through the regulation of the heat induced small HSP (sHSP) transcriptional cascade. Its function is as follows. Induces autophagy. This chain is BAG family molecular chaperone regulator 6, found in Arabidopsis thaliana (Mouse-ear cress).